A 90-amino-acid polypeptide reads, in one-letter code: MALDSAKKAEIVAKFARKEGDTGSPEVQIALLTARIAELTEHLKVFKKDFSSRLGLLKLVGQRKRLLKYLKNKDYTTYSKLIVELGIRDK.

Belongs to the universal ribosomal protein uS15 family. In terms of assembly, part of the 30S ribosomal subunit. Forms a bridge to the 50S subunit in the 70S ribosome, contacting the 23S rRNA.

One of the primary rRNA binding proteins, it binds directly to 16S rRNA where it helps nucleate assembly of the platform of the 30S subunit by binding and bridging several RNA helices of the 16S rRNA. Its function is as follows. Forms an intersubunit bridge (bridge B4) with the 23S rRNA of the 50S subunit in the ribosome. In Campylobacter curvus (strain 525.92), this protein is Small ribosomal subunit protein uS15.